Consider the following 78-residue polypeptide: Large ribosomal subunit protein bL28 (78 aa).

Belongs to the bacterial ribosomal protein bL28 family.

This is Large ribosomal subunit protein bL28 from Parasynechococcus marenigrum (strain WH8102).